Consider the following 403-residue polypeptide: NADH-quinone oxidoreductase subunit D (403 aa).

It belongs to the complex I 49 kDa subunit family. In terms of assembly, NDH-1 is composed of 15 different subunits. Subunits NuoB, C, D, E, F, and G constitute the peripheral sector of the complex.

Its subcellular location is the cell membrane. It catalyses the reaction a quinone + NADH + 5 H(+)(in) = a quinol + NAD(+) + 4 H(+)(out). NDH-1 shuttles electrons from NADH, via FMN and iron-sulfur (Fe-S) centers, to quinones in the respiratory chain. The immediate electron acceptor for the enzyme in this species is believed to be a menaquinone. Couples the redox reaction to proton translocation (for every two electrons transferred, four hydrogen ions are translocated across the cytoplasmic membrane), and thus conserves the redox energy in a proton gradient. The chain is NADH-quinone oxidoreductase subunit D from Deinococcus geothermalis (strain DSM 11300 / CIP 105573 / AG-3a).